The following is a 430-amino-acid chain: Levansucrase Lscgamma (430 aa).

Residues Trp-60, Asp-61, Ala-147, Arg-217, and Asp-218 each coordinate sucrose. The active-site Nucleophile is the Asp-61. Glu-302 serves as the catalytic Proton donor/acceptor.

It belongs to the glycosyl hydrolase 68 family. In terms of assembly, homodimer.

The catalysed reaction is [6)-beta-D-fructofuranosyl-(2-&gt;](n) alpha-D-glucopyranoside + sucrose = [6)-beta-D-fructofuranosyl-(2-&gt;](n+1) alpha-D-glucopyranoside + D-glucose. With respect to regulation, sucrose hydrolase activity is negatively affected by salt concentration. The levan polymerization rate increases sharply in relation to sucrose concentration reaching the maximum at 100 mM sucrose, and then steadily decreases, suggesting a strong inhibition of the activity by the substrate. Functionally, catalyzes the synthesis of levan, a fructose polymer, by transferring the fructosyl moiety from sucrose to a growing acceptor molecule. Also displays sucrose hydrolase activity. Can depolymerize the levan produced once substrate is completely exhausted. The polypeptide is Levansucrase Lscgamma (Pseudomonas syringae pv. actinidiae).